Reading from the N-terminus, the 60-residue chain is uncharacterized protein (60 aa).

Residues 27–50 (VKNNNNNNNNNNNNNNNNNNNNNK) are disordered. The span at 29–49 (NNNNNNNNNNNNNNNNNNNNN) shows a compositional bias: low complexity.

This is an uncharacterized protein from Dictyostelium discoideum (Social amoeba).